Reading from the N-terminus, the 114-residue chain is Large ribosomal subunit protein uL22 (114 aa).

The protein belongs to the universal ribosomal protein uL22 family. As to quaternary structure, part of the 50S ribosomal subunit.

Functionally, this protein binds specifically to 23S rRNA; its binding is stimulated by other ribosomal proteins, e.g. L4, L17, and L20. It is important during the early stages of 50S assembly. It makes multiple contacts with different domains of the 23S rRNA in the assembled 50S subunit and ribosome. In terms of biological role, the globular domain of the protein is located near the polypeptide exit tunnel on the outside of the subunit, while an extended beta-hairpin is found that lines the wall of the exit tunnel in the center of the 70S ribosome. The sequence is that of Large ribosomal subunit protein uL22 from Ehrlichia canis (strain Jake).